We begin with the raw amino-acid sequence, 206 residues long: Ephrin-A4 (206 aa).

The signal sequence occupies residues methionine 1–serine 25. The Ephrin RBD domain occupies leucine 26–glutamate 158. An N-linked (GlcNAc...) asparagine glycan is attached at asparagine 33. The short motif at arginine 41–aspartate 43 is the Cell attachment site element. Disulfide bonds link cysteine 58–cysteine 99 and cysteine 86–cysteine 147. Residue asparagine 98 is glycosylated (N-linked (GlcNAc...) asparagine). The tract at residues serine 161–tryptophan 180 is disordered. Serine 175 carries GPI-anchor amidated serine lipidation. Positions glycine 176 to leucine 206 are cleaved as a propeptide — removed in mature form.

The protein belongs to the ephrin family. In terms of tissue distribution, expressed in myogenic progenitor cells.

The protein resides in the cell membrane. Cell surface GPI-bound ligand for Eph receptors, a family of receptor tyrosine kinases which are crucial for migration, repulsion and adhesion during neuronal, vascular and epithelial development. Binds promiscuously Eph receptors residing on adjacent cells, leading to contact-dependent bidirectional signaling into neighboring cells. May play a role in the interaction between activated B-lymphocytes and dendritic cells in tonsils. This Mus musculus (Mouse) protein is Ephrin-A4 (Efna4).